Consider the following 711-residue polypeptide: Polyribonucleotide nucleotidyltransferase (711 aa).

Residues D490 and D496 each contribute to the Mg(2+) site. In terms of domain architecture, KH spans 556 to 615 (PRIETMQIPTDKIREVIGSGGKVIREIVEVSGAKVDINDEGIIKIASPNGEAIKKAYDMI). Positions 625–693 (GMVYTGTVVK…DRGKVRLSMK (69 aa)) constitute an S1 motif domain.

The protein belongs to the polyribonucleotide nucleotidyltransferase family. The cofactor is Mg(2+).

It localises to the cytoplasm. It catalyses the reaction RNA(n+1) + phosphate = RNA(n) + a ribonucleoside 5'-diphosphate. Its function is as follows. Involved in mRNA degradation. Catalyzes the phosphorolysis of single-stranded polyribonucleotides processively in the 3'- to 5'-direction. This chain is Polyribonucleotide nucleotidyltransferase, found in Roseobacter denitrificans (strain ATCC 33942 / OCh 114) (Erythrobacter sp. (strain OCh 114)).